We begin with the raw amino-acid sequence, 137 residues long: Large ribosomal subunit protein uL16 (137 aa).

Belongs to the universal ribosomal protein uL16 family. Part of the 50S ribosomal subunit.

Functionally, binds 23S rRNA and is also seen to make contacts with the A and possibly P site tRNAs. In Streptococcus pneumoniae serotype 2 (strain D39 / NCTC 7466), this protein is Large ribosomal subunit protein uL16.